The primary structure comprises 79 residues: uncharacterized protein (79 aa).

The interval 1–27 (MRQRGQEHLPTSVKSEPRACNNPTVAE) is disordered.

This is an uncharacterized protein from Homo sapiens (Human).